The sequence spans 367 residues: MKASPHRPTKALIHLGAIRQNIQQMGAHIPQGTLKLAVVKANAYGHGAVAVAKAIQDDVDGFCVSNIDEAIELRQAGLSKPILILGVSEIEAVALAKEYDFTLTVAGLEWIQALLDKEVDLTGLTVHLKIDSGMGRIGFREASEVEQAQDLLQQHGVCVEGIFTHFATADEESDDYFNAQLERFKTILASMKEVPELVHASNSATTLWHVETIFNAVRMGDAMYGLNPSGAVLDLPYDLIPALTLESALVHVKTVPAGACMGYGATYQADSEQVIATVPIGYADGWTRDMQNFSVLVDGQACPIVGRVSMDQITIRLPKPYPLGTKVTLIGSNGDKEITATQVATYRVTINYEVVCLLSDRIPREYY.

Lys40 serves as the catalytic Proton acceptor; specific for D-alanine. Lys40 carries the N6-(pyridoxal phosphate)lysine modification. Arg136 is a substrate binding site. Catalysis depends on Tyr263, which acts as the Proton acceptor; specific for L-alanine. Substrate is bound at residue Met310.

The protein belongs to the alanine racemase family. It depends on pyridoxal 5'-phosphate as a cofactor.

It carries out the reaction L-alanine = D-alanine. The protein operates within amino-acid biosynthesis; D-alanine biosynthesis; D-alanine from L-alanine: step 1/1. Catalyzes the interconversion of L-alanine and D-alanine. May also act on other amino acids. In Streptococcus pneumoniae serotype 19F (strain G54), this protein is Alanine racemase (alr).